The primary structure comprises 146 residues: Sordarin/hypoxysordarin biosynthesis cluster protein G (146 aa).

Its pathway is antibiotic biosynthesis. Functionally, part of the gene cluster that mediates the biosynthesis of sordarin and hypoxysordarin, glycoside antibiotics with a unique tetracyclic diterpene aglycone structure. First, the geranylgeranyl diphosphate synthase sdnC constructs GGDP from farnesyl diphosphate and isopentenyl diphosphate. The diterpene cyclase sdnA then catalyzes the cyclization of GGDP to afford cycloaraneosene. Cycloaraneosene is then hydroxylated four times by the putative cytochrome P450 monooxygenases sdnB, sdnE, sdnF and sdnH to give a hydroxylated cycloaraneosene derivative such as cycloaraneosene-8,9,13,19-tetraol. Although the order of the hydroxylations is unclear, at least C8, C9 and C13 of the cycloaraneosene skeleton are hydroxylated before the sordaricin formation. Dehydration of the 13-hydroxy group of the hydroxylated cycloaraneosene derivative might be catalyzed by an unassigned hypothetical protein such as sdnG and sdnP to construct the cyclopentadiene moiety. The FAD-dependent oxidoreductase sdnN is proposed to catalyze the oxidation at C9 of the hydroxylated cycloaraneosene derivative and also catalyze the Baeyer-Villiger oxidation to give the lactone intermediate. The presumed lactone intermediate would be hydrolyzed to give an acrolein moiety and a carboxylate moiety. Then, [4+2]cycloaddition would occur between the acrolein moiety and the cyclopentadiene moiety to give sordaricin. SdnN might also be involved in the [4+2]cycloaddition after the hypothesized oxidation to accommodate the oxidized product and prompt the [4+2]cycloaddition. GDP-6-deoxy-D-altrose may be biosynthesized from GDP-D-mannose by the putative GDP-mannose-4,6-dehydratase sdnI and the short-chain dehydrogenase sdnK. The glycosyltransferase sdnJ catalyzes the attachment of 6-deoxy-D-altrose onto the 19-hydroxy group of sordaricin to give 4'-O-demethylsordarin. The methyltransferase sdnD would complete the biosynthesis of sordarin. Sordarin can be further modified into hypoxysordarin. The unique acyl chain at the 3'-hydroxy group of hypoxysordarin would be constructed by an iterative type I PKS sdnO and the trans-acting polyketide methyltransferase sdnL. SdnL would be responsible for the introduction of an alpha-methyl group of the polyketide chain. Alternatively, the beta-lactamase-like protein sdnR might be responsible for the cleavage and transfer of the polyketide chain from the PKS sdnO to sordarin. Two putative cytochrome P450 monooxygenases, sdnQ and sdnT, might catalyze the epoxidations of the polyketide chain to complete the biosynthesis of hypoxysordarin. Transcriptional regulators sdnM and sdnS are presumably encoded for the transcriptional regulation of the expression of the sdn gene cluster. In Sordaria araneosa (Pleurage araneosa), this protein is Sordarin/hypoxysordarin biosynthesis cluster protein G.